Consider the following 679-residue polypeptide: Kelch-like protein diablo (679 aa).

Positions 1-48 (MGDLPGGGGGAAGGAGAAGGGGGGGNGAAGSSSSGGGASGSGGGGPGS) are enriched in gly residues. The segment at 1-84 (MGDLPGGGGG…RLSHTSEKHP (84 aa)) is disordered. Residues 101 to 168 (CDVVLNVGGR…CYTAHIIVEE (68 aa)) form the BTB domain. The 103-residue stretch at 203-305 (CLGIRAFADT…SPKFLVGTVG (103 aa)) folds into the BACK domain. Kelch repeat units lie at residues 352 to 398 (VLFA…VLND), 400 to 446 (LYAV…VLDG), 447 to 493 (FLYA…VLGG), 495 to 540 (LYAI…VFNN), 542 to 587 (IYAV…VVNG), and 588 to 634 (QLYA…VMRA). The tract at residues 643–679 (CDNNSSNNNNNNYNLKHQQQQPQQQQQQQQQQTQQQL) is disordered. Residues 645–679 (NNSSNNNNNNYNLKHQQQQPQQQQQQQQQQTQQQL) show a composition bias toward low complexity.

Its pathway is protein modification; protein ubiquitination. In terms of biological role, probable substrate-specific adapter of an E3 ubiquitin-protein ligase complex which mediates the ubiquitination and subsequent proteasomal degradation of target proteins. May have a role in synapse differentiation and growth. The chain is Kelch-like protein diablo from Drosophila willistoni (Fruit fly).